A 538-amino-acid chain; its full sequence is MGLLLLVLILTPSLAAYRHPDFPLLEKAQQLLQSTGSPYSTNCWLCTSSSTETPGTAYPASPREWTSIEAELHISYRWDPNLKGLMRPANSLLSMVKQDFPDIRQKPPIFGPIFTNINLMGIAPICVMAKRKNGTNVGTLPSTVCNVTFTVDSNQQTYQTYTHNQFRHQPRFPKPPNITFPQGTLLDKSSRFCQGRPSSCSTRNFWFRPADYNQCLQISNLSSTAEWVLLDQTRNSLFWENKTKGANQSQTPCVQVLAGMTIATSYLGISAVSEFFGTSLTPLFHFHISTCLKTQGAFYICGQSIHQCLPSNWTGTCTIGYVTPDIFIAPGNLSLPIPIYGNSQLPRVRRAIHFIPLLAGLGILAGTGTGIAGITKASLTYSQLSKEIANNIDTMAKALTTMQEQIDSLAAVVLQNRRGLDMLTAAQGGICLALDEKCCFWVNQSGKVQDNIRQLLNQASSLRERATQGWLNWEGTWKWFSWVLPLTGPLVSLLLLLLFGPCLLNLITQFVSSRLQAIKLQTNLSAGRHPRNIQESPF.

The N-terminal stretch at 1 to 15 (MGLLLLVLILTPSLA) is a signal peptide. Topologically, residues 16–478 (AYRHPDFPLL…GWLNWEGTWK (463 aa)) are extracellular. The CXXC motif lies at 43–46 (CWLC). Disulfide bonds link Cys-43-Cys-46, Cys-43-Cys-439, and Cys-431-Cys-438. Asn-133, Asn-146, Asn-177, Asn-220, Asn-241, Asn-247, Asn-312, and Asn-332 each carry an N-linked (GlcNAc...) asparagine glycan. The fusion peptide stretch occupies residues 354–374 (FIPLLAGLGILAGTGTGIAGI). The CKS-17 signature appears at 414 to 430 (LQNRRGLDMLTAAQGGI). The CX6CC signature appears at 431–439 (CLALDEKCC). An N-linked (GlcNAc...) asparagine glycan is attached at Asn-443. The helical transmembrane segment at 479–499 (WFSWVLPLTGPLVSLLLLLLF) threads the bilayer. Topologically, residues 500–538 (GPCLLNLITQFVSSRLQAIKLQTNLSAGRHPRNIQESPF) are cytoplasmic.

It belongs to the gamma type-C retroviral envelope protein family. HERV class-I FRD env subfamily. As to quaternary structure, the surface and transmembrane proteins form a heterodimer. They are attached by non-covalent interactions or by a labile interchain disulfide bond. Post-translationally, specific enzymatic cleavages in vivo yield the mature SU and TM proteins. The CXXC motif is highly conserved across a broad range of retroviral envelope proteins. It is thought to participate in the formation of a labile disulfide bond possibly with the CX6CC motif present in the transmembrane protein.

It localises to the virion. It is found in the cell membrane. In terms of biological role, this endogenous retroviral envelope protein has retained its original fusogenic properties and participates in trophoblast fusion and the formation of a syncytium during placenta morphogenesis. The interaction with MFSD2A is apparently important for this process. Its function is as follows. Endogenous envelope proteins may have kept, lost or modified their original function during evolution but this one can still make pseudotypes with MLV, HIV-1 or SIV-1 virions and confer infectivity. Retroviral envelope proteins mediate receptor recognition and membrane fusion during early infection. The surface protein mediates receptor recognition, while the transmembrane protein anchors the envelope heterodimer to the viral membrane through one transmembrane domain. The other hydrophobic domain, called fusion peptide, mediates fusion of the viral membrane with the target cell membrane. This is Syncytin-2 (ERVFRD-1) from Pan troglodytes (Chimpanzee).